The sequence spans 1123 residues: MNKTKLIKIIFVIGVWILLSTFIINIYNENFEIVNYNNNSQSLKKIFQLNGDLKDEKLSIFLIPHSHCDSGWLQDYDWYYNHVVQYILSGIVNELNLDKEKKFNWVEIGGWVQNDEATATIDDVITQMTQGHQWLKDTLNYTIEYAWQIDPFGYSSSTPTIFSSMGIKGLIINRVSDDVKSYMKSAKEMEFIWKGSESLGEQSQMLVSTLNVHYDYPKHIDPKKDFSLEERVKGFTKYIKDLSNTRESSILMIPLGDDFRYSNAKNEFSVSKEWLKVIQDNKEKYNIKEIKYATIDEYFIALEDEFMNKLGKTVEENLKTGFSSTLSLYNKDFFPYSTGDLEYWTGYYTTRPLLKRLIRESSLLQKSSDILYTLAIGENSNNQIDINNLQTLSNQLNENRNTIALVQHHDIVTGTSRSFVLNDNFQRLQKSRISNYNIISNSLEYLLNKDNNNNENTDSTNEPFNFENVIDLSNEINNQYSLVFHNTLGWEVNQHVSFRIKVNKNDNQLLESIQLVEAISNKTIQIQIIPIQDDSNCQSIENNYIVFAIINLPPLGLNTYYLSISSNEDSKPNTILSKPKLLKKGNEINFNNNRFKVEFESNGLISKITDKNSNEIKTIEQTFHQYSTKKSGPYIFNVKGGKKHGFLENPDKFIYHDGPLVSQLTMLYGVDDGCNVTSIVVQRIYKNNEIDNSNSKSLITENYIETGYSINGDMNRETTINYKVKDLENDDIFYTDNGLESRKRIYNHDRTVNQNYYPVLGYIKLKETSENNNHQYTVYVDRSVGATSPSDGEMEIMIHRTMDTDDWKGVNWPSKDIGRSDAKLYFNMDLVNNQLQNEKRISLHITNQPIMFVKKHNNQTGYLLKYSPLSNQLPSNIHLQSLLTLKNNTVGLRLFNIHEVDSNTQSTTDTDKSTLFNELEISNFIETGLSFLKLTKNNLIDKYSTRINKKFPVKCGESEYSFINEKPSSIIFSNNGTNNIIDGENKGENNKTIETIQIKPHEIKSFTFNFNFQLDQIIPNNNNYAINKELNNEYIEQSIENQRYEYDFSFFPIKPTFYDDRGKYNRPNHLALILSLSIGTPAGILIIVIALVVIYKKRKNRKTLTSSYSLLNLILKDRADSSP.

An N-terminal signal peptide occupies residues 1–21; that stretch reads MNKTKLIKIIFVIGVWILLST. N-linked (GlcNAc...) asparagine glycosylation is found at N2 and N38. The Extracellular portion of the chain corresponds to 22–1072; sequence FIINIYNENF…KYNRPNHLAL (1051 aa). 2 residues coordinate Zn(2+): H67 and D69. N-linked (GlcNAc...) asparagine glycosylation occurs at N140. D150 and H409 together coordinate Zn(2+). D150 serves as the catalytic Nucleophile. N521, N675, N858, N887, N975, and N990 each carry an N-linked (GlcNAc...) asparagine glycan. The chain crosses the membrane as a helical span at residues 1073–1093; that stretch reads ILSLSIGTPAGILIIVIALVV. At 1094-1123 the chain is on the cytoplasmic side; the sequence is IYKKRKNRKTLTSSYSLLNLILKDRADSSP.

Belongs to the glycosyl hydrolase 38 family. Requires Zn(2+) as cofactor.

It localises to the membrane. It catalyses the reaction Hydrolysis of terminal, non-reducing alpha-D-mannose residues in alpha-D-mannosides.. The chain is Alpha-mannosidase E (manE) from Dictyostelium discoideum (Social amoeba).